Reading from the N-terminus, the 555-residue chain is Glutamine--tRNA ligase (555 aa).

A 'HIGH' region motif is present at residues 34–44 (PEPNGYLHIGH). ATP contacts are provided by residues 35–37 (EPN) and 41–47 (HIGHAKS). Residues Asp-67 and Tyr-212 each contribute to the L-glutamine site. Residues Thr-231, 261–262 (RL), and 269–271 (MSK) contribute to the ATP site. The 'KMSKS' region signature appears at 268-272 (VMSKR).

The protein belongs to the class-I aminoacyl-tRNA synthetase family. As to quaternary structure, monomer.

The protein resides in the cytoplasm. The enzyme catalyses tRNA(Gln) + L-glutamine + ATP = L-glutaminyl-tRNA(Gln) + AMP + diphosphate. The polypeptide is Glutamine--tRNA ligase (Proteus mirabilis (strain HI4320)).